We begin with the raw amino-acid sequence, 496 residues long: ATP synthase subunit beta 1 (496 aa).

167–174 (GGAGVGKT) is a binding site for ATP. The tract at residues 474–496 (REAAAAQQSTAQQAAPAEKEPAA) is disordered. Residues 476–489 (AAAAQQSTAQQAAP) show a composition bias toward low complexity.

Belongs to the ATPase alpha/beta chains family. F-type ATPases have 2 components, CF(1) - the catalytic core - and CF(0) - the membrane proton channel. CF(1) has five subunits: alpha(3), beta(3), gamma(1), delta(1), epsilon(1). CF(0) has three main subunits: a(1), b(2) and c(9-12). The alpha and beta chains form an alternating ring which encloses part of the gamma chain. CF(1) is attached to CF(0) by a central stalk formed by the gamma and epsilon chains, while a peripheral stalk is formed by the delta and b chains.

The protein localises to the cell inner membrane. The catalysed reaction is ATP + H2O + 4 H(+)(in) = ADP + phosphate + 5 H(+)(out). Its function is as follows. Produces ATP from ADP in the presence of a proton gradient across the membrane. The catalytic sites are hosted primarily by the beta subunits. The sequence is that of ATP synthase subunit beta 1 from Paraburkholderia xenovorans (strain LB400).